Consider the following 409-residue polypeptide: Glucose-1-phosphate adenylyltransferase (409 aa).

Alpha-D-glucose 1-phosphate contacts are provided by residues Gly-168, 183-184 (EK), and Ser-201.

The protein belongs to the bacterial/plant glucose-1-phosphate adenylyltransferase family. As to quaternary structure, homotetramer.

The catalysed reaction is alpha-D-glucose 1-phosphate + ATP + H(+) = ADP-alpha-D-glucose + diphosphate. It participates in glycan biosynthesis; glycogen biosynthesis. Functionally, involved in the biosynthesis of ADP-glucose, a building block required for the elongation reactions to produce glycogen. Catalyzes the reaction between ATP and alpha-D-glucose 1-phosphate (G1P) to produce pyrophosphate and ADP-Glc. This is Glucose-1-phosphate adenylyltransferase from Corynebacterium efficiens (strain DSM 44549 / YS-314 / AJ 12310 / JCM 11189 / NBRC 100395).